We begin with the raw amino-acid sequence, 102 residues long: MVIGLSHYLTVSAILFTLGVFGIFLNRKNVIVILMSVELILLSVNINMVAFSHFLNDIVGQVFALFILTVAAAEAAIGLAILVVFYRNRGSIAVEDVNMMKG.

3 helical membrane passes run 5-25, 31-51, and 65-85; these read LSHY…GIFL, IVIL…MVAF, and LFIL…LVVF.

Belongs to the complex I subunit 4L family. As to quaternary structure, NDH-1 is composed of 14 different subunits. Subunits NuoA, H, J, K, L, M, N constitute the membrane sector of the complex.

Its subcellular location is the cell inner membrane. It carries out the reaction a quinone + NADH + 5 H(+)(in) = a quinol + NAD(+) + 4 H(+)(out). Functionally, NDH-1 shuttles electrons from NADH, via FMN and iron-sulfur (Fe-S) centers, to quinones in the respiratory chain. The immediate electron acceptor for the enzyme in this species is believed to be ubiquinone. Couples the redox reaction to proton translocation (for every two electrons transferred, four hydrogen ions are translocated across the cytoplasmic membrane), and thus conserves the redox energy in a proton gradient. The polypeptide is NADH-quinone oxidoreductase subunit K 1 (Rhizobium etli (strain CIAT 652)).